The chain runs to 283 residues: Protein BASIC PENTACYSTEINE5 (283 aa).

The alanine-zipper stretch occupies residues 51–86 (AVKERNEAVAATKEALASRDEALEQRDKALSERDNA). The stretch at 63–89 (KEALASRDEALEQRDKALSERDNAIME) forms a coiled coil. The disordered stretch occupies residues 122–176 (EESHLPNPSPISTIPPEAANTRPTKRKKESKQGKKMGEDLNRPVASPGKKSRKDW). The segment covering 151–162 (SKQGKKMGEDLN) has biased composition (basic and acidic residues).

Belongs to the BBR/BPC family. As to quaternary structure, homodimer. Heterodimer. As to expression, expressed in seedlings, leaves and pistils.

The protein resides in the nucleus. In terms of biological role, transcriptional regulator that specifically binds to GA-rich elements (GAGA-repeats) present in regulatory sequences of genes involved in developmental processes. This is Protein BASIC PENTACYSTEINE5 (BPC5) from Arabidopsis thaliana (Mouse-ear cress).